We begin with the raw amino-acid sequence, 302 residues long: N-acetylmuramic acid 6-phosphate etherase (302 aa).

Residues 58 to 221 form the SIS domain; it reads IGEAFLNGGR…STGAMVKTGK (164 aa). The active-site Proton donor is Glu86. The active site involves Glu117.

The protein belongs to the GCKR-like family. MurNAc-6-P etherase subfamily. As to quaternary structure, homodimer.

It catalyses the reaction N-acetyl-D-muramate 6-phosphate + H2O = N-acetyl-D-glucosamine 6-phosphate + (R)-lactate. Its pathway is amino-sugar metabolism; N-acetylmuramate degradation. In terms of biological role, specifically catalyzes the cleavage of the D-lactyl ether substituent of MurNAc 6-phosphate, producing GlcNAc 6-phosphate and D-lactate. This chain is N-acetylmuramic acid 6-phosphate etherase, found in Clostridium botulinum (strain Hall / ATCC 3502 / NCTC 13319 / Type A).